Here is a 92-residue protein sequence, read N- to C-terminus: Acylphosphatase (92 aa).

The Acylphosphatase-like domain maps to 4-92 (AVQLDVFGRV…SACHKFSVVG (89 aa)). Catalysis depends on residues arginine 19 and asparagine 37.

Belongs to the acylphosphatase family.

It carries out the reaction an acyl phosphate + H2O = a carboxylate + phosphate + H(+). This is Acylphosphatase (acyP) from Latilactobacillus sakei subsp. sakei (strain 23K) (Lactobacillus sakei subsp. sakei).